The sequence spans 212 residues: LexA repressor (212 aa).

The H-T-H motif DNA-binding region spans 29–49; sequence VREIGEAVGLSSSSTIHGHIE. Active-site for autocatalytic cleavage activity residues include Ser-133 and Lys-171.

It belongs to the peptidase S24 family. Homodimer.

The enzyme catalyses Hydrolysis of Ala-|-Gly bond in repressor LexA.. Its function is as follows. Represses a number of genes involved in the response to DNA damage (SOS response), including recA and lexA. In the presence of single-stranded DNA, RecA interacts with LexA causing an autocatalytic cleavage which disrupts the DNA-binding part of LexA, leading to derepression of the SOS regulon and eventually DNA repair. In Leuconostoc mesenteroides subsp. mesenteroides (strain ATCC 8293 / DSM 20343 / BCRC 11652 / CCM 1803 / JCM 6124 / NCDO 523 / NBRC 100496 / NCIMB 8023 / NCTC 12954 / NRRL B-1118 / 37Y), this protein is LexA repressor.